A 145-amino-acid polypeptide reads, in one-letter code: uncharacterized protein (145 aa).

The helical transmembrane segment at 104 to 124 (IEVIILSHHFVIGFSFLLGLL) threads the bilayer.

The protein resides in the membrane. This is an uncharacterized protein from Saccharomyces cerevisiae (strain ATCC 204508 / S288c) (Baker's yeast).